The following is a 164-amino-acid chain: Phosphopantetheine adenylyltransferase (164 aa).

Serine 9 lines the substrate pocket. ATP is bound by residues 9 to 10 (SF) and histidine 17. The substrate site is built by lysine 41, leucine 73, and lysine 87. ATP-binding positions include 88–90 (GLR), glutamate 98, and 123–129 (YSYLSSS).

Belongs to the bacterial CoaD family. Homohexamer. It depends on Mg(2+) as a cofactor.

The protein resides in the cytoplasm. The catalysed reaction is (R)-4'-phosphopantetheine + ATP + H(+) = 3'-dephospho-CoA + diphosphate. Its pathway is cofactor biosynthesis; coenzyme A biosynthesis; CoA from (R)-pantothenate: step 4/5. In terms of biological role, reversibly transfers an adenylyl group from ATP to 4'-phosphopantetheine, yielding dephospho-CoA (dPCoA) and pyrophosphate. In Clostridium botulinum (strain 657 / Type Ba4), this protein is Phosphopantetheine adenylyltransferase.